A 202-amino-acid polypeptide reads, in one-letter code: Na(+)-translocating NADH-quinone reductase subunit E (202 aa).

6 consecutive transmembrane segments (helical) span residues 11-31 (SIFI…YLAV), 39-59 (MGLG…NNLL), 79-99 (LTFV…QILE), 114-134 (GIFL…LFMV), 144-164 (VTFG…LAGI), and 180-200 (LGIT…FSGI).

The protein belongs to the NqrDE/RnfAE family. Composed of six subunits; NqrA, NqrB, NqrC, NqrD, NqrE and NqrF.

Its subcellular location is the cell inner membrane. The catalysed reaction is a ubiquinone + n Na(+)(in) + NADH + H(+) = a ubiquinol + n Na(+)(out) + NAD(+). Its function is as follows. NQR complex catalyzes the reduction of ubiquinone-1 to ubiquinol by two successive reactions, coupled with the transport of Na(+) ions from the cytoplasm to the periplasm. NqrA to NqrE are probably involved in the second step, the conversion of ubisemiquinone to ubiquinol. In Maridesulfovibrio salexigens (strain ATCC 14822 / DSM 2638 / NCIMB 8403 / VKM B-1763) (Desulfovibrio salexigens), this protein is Na(+)-translocating NADH-quinone reductase subunit E.